Reading from the N-terminus, the 78-residue chain is Protein M6 (78 aa).

This sequence belongs to the A9/FIL1 family. Tapetum of anthers.

It localises to the secreted. This is Protein M6 (M6) from Lilium henryi (Henry's lily).